The primary structure comprises 585 residues: Nitrogen permease regulator 3-like protein (585 aa).

Positions 117-157 are disordered; sequence GEWAKRRKPRTTVESNASSSHLVSKPESSHPSTGSFEVKSS. Residues 128–138 show a composition bias toward polar residues; it reads TVESNASSSHL. Residues 148–157 show a composition bias toward low complexity; sequence STGSFEVKSS.

Belongs to the NPR3 family.

The chain is Nitrogen permease regulator 3-like protein from Schizosaccharomyces pombe (strain 972 / ATCC 24843) (Fission yeast).